The following is a 363-amino-acid chain: Aminomethyltransferase (363 aa).

It belongs to the GcvT family. In terms of assembly, the glycine cleavage system is composed of four proteins: P, T, L and H.

It catalyses the reaction N(6)-[(R)-S(8)-aminomethyldihydrolipoyl]-L-lysyl-[protein] + (6S)-5,6,7,8-tetrahydrofolate = N(6)-[(R)-dihydrolipoyl]-L-lysyl-[protein] + (6R)-5,10-methylene-5,6,7,8-tetrahydrofolate + NH4(+). Its function is as follows. The glycine cleavage system catalyzes the degradation of glycine. The polypeptide is Aminomethyltransferase (Nitrosomonas europaea (strain ATCC 19718 / CIP 103999 / KCTC 2705 / NBRC 14298)).